A 312-amino-acid chain; its full sequence is Golgi to ER traffic protein 2 (312 aa).

At 1 to 175 the chain is on the cytoplasmic side; the sequence is MSDSPSISAE…VQYNTYRHQV (175 aa). Residues 176-196 form a helical membrane-spanning segment; it reads WKFRFLAVRYFALLANFIYHF. Topologically, residues 197-224 are lumenal; sequence YIIGDSISFASSSHQFIRELIPVEPARS. Residues 225 to 244 traverse the membrane as a helical segment; that stretch reads FFTLFSTIEVVIIASYYFLG. At 245 to 288 the chain is on the cytoplasmic side; that stretch reads TKEGFFSTATSNNFVVKLLDMGSMVLPQLQQFKTIAVRLLGYYE. The helical transmembrane segment at 289-309 threads the bilayer; the sequence is LLAVLLGDLSLVVVLFGLHSV. Topologically, residues 310-312 are lumenal; the sequence is LGN.

It belongs to the GET2 family. In terms of assembly, component of the Golgi to ER traffic (GET) complex, which is composed of GET1, GET2 and GET3. Within the complex, GET1 and GET2 form a heterotetramer which is stabilized by phosphatidylinositol binding and which binds to the GET3 homodimer.

It localises to the endoplasmic reticulum membrane. The protein resides in the golgi apparatus membrane. Its function is as follows. Required for the post-translational delivery of tail-anchored (TA) proteins to the endoplasmic reticulum. Together with GET1, acts as a membrane receptor for soluble GET3, which recognizes and selectively binds the transmembrane domain of TA proteins in the cytosol. The GET complex cooperates with the HDEL receptor ERD2 to mediate the ATP-dependent retrieval of resident ER proteins that contain a C-terminal H-D-E-L retention signal from the Golgi to the ER. The sequence is that of Golgi to ER traffic protein 2 from Scheffersomyces stipitis (strain ATCC 58785 / CBS 6054 / NBRC 10063 / NRRL Y-11545) (Yeast).